A 720-amino-acid chain; its full sequence is GTPase-activating protein gyp2 (720 aa).

Positions 20–85 constitute a GRAM domain; sequence LDPASFFRIN…AAVRKLEREN (66 aa). Residues 216–404 form the Rab-GAP TBC domain; the sequence is GIPNNLRADI…RILDCLFVNG (189 aa).

The protein localises to the cytoplasm. It is found in the nucleus. Functionally, stimulates specifically the GTPase activity of ypt2 and ryh1. Inactivates ryh1 during recycling between the endosome and the Golgi compartments. This chain is GTPase-activating protein gyp2, found in Schizosaccharomyces pombe (strain 972 / ATCC 24843) (Fission yeast).